Here is a 188-residue protein sequence, read N- to C-terminus: Elongation factor P (188 aa).

The protein belongs to the elongation factor P family.

Its subcellular location is the cytoplasm. The protein operates within protein biosynthesis; polypeptide chain elongation. Involved in peptide bond synthesis. Stimulates efficient translation and peptide-bond synthesis on native or reconstituted 70S ribosomes in vitro. Probably functions indirectly by altering the affinity of the ribosome for aminoacyl-tRNA, thus increasing their reactivity as acceptors for peptidyl transferase. This Phenylobacterium zucineum (strain HLK1) protein is Elongation factor P.